The following is a 357-amino-acid chain: 3-dehydroquinate synthase (357 aa).

NAD(+) is bound by residues 104-108, 128-129, Lys141, and 168-171; these read GVVGD, TT, and FLET. 3 residues coordinate Zn(2+): Glu183, His243, and His260.

This sequence belongs to the sugar phosphate cyclases superfamily. Dehydroquinate synthase family. Requires NAD(+) as cofactor. Co(2+) is required as a cofactor. The cofactor is Zn(2+).

It is found in the cytoplasm. The enzyme catalyses 7-phospho-2-dehydro-3-deoxy-D-arabino-heptonate = 3-dehydroquinate + phosphate. Its pathway is metabolic intermediate biosynthesis; chorismate biosynthesis; chorismate from D-erythrose 4-phosphate and phosphoenolpyruvate: step 2/7. Its function is as follows. Catalyzes the conversion of 3-deoxy-D-arabino-heptulosonate 7-phosphate (DAHP) to dehydroquinate (DHQ). This Streptococcus pyogenes serotype M18 (strain MGAS8232) protein is 3-dehydroquinate synthase.